The chain runs to 634 residues: 1-deoxy-D-xylulose-5-phosphate synthase (634 aa).

Thiamine diphosphate contacts are provided by residues H74 and 115-117 (AHS). D146 is a Mg(2+) binding site. Thiamine diphosphate contacts are provided by residues 147-148 (GA), N176, Y283, and E365. Residue N176 coordinates Mg(2+).

The protein belongs to the transketolase family. DXPS subfamily. Homodimer. It depends on Mg(2+) as a cofactor. The cofactor is thiamine diphosphate.

The enzyme catalyses D-glyceraldehyde 3-phosphate + pyruvate + H(+) = 1-deoxy-D-xylulose 5-phosphate + CO2. The protein operates within metabolic intermediate biosynthesis; 1-deoxy-D-xylulose 5-phosphate biosynthesis; 1-deoxy-D-xylulose 5-phosphate from D-glyceraldehyde 3-phosphate and pyruvate: step 1/1. Catalyzes the acyloin condensation reaction between C atoms 2 and 3 of pyruvate and glyceraldehyde 3-phosphate to yield 1-deoxy-D-xylulose-5-phosphate (DXP). The sequence is that of 1-deoxy-D-xylulose-5-phosphate synthase from Burkholderia mallei (strain ATCC 23344).